The primary structure comprises 430 residues: Phosphoglucosamine mutase (430 aa).

The active-site Phosphoserine intermediate is Ser-93. Mg(2+) is bound by residues Ser-93, Asp-227, Asp-229, and Asp-231. Ser-93 bears the Phosphoserine mark.

This sequence belongs to the phosphohexose mutase family. Requires Mg(2+) as cofactor. Post-translationally, activated by phosphorylation.

It catalyses the reaction alpha-D-glucosamine 1-phosphate = D-glucosamine 6-phosphate. Catalyzes the conversion of glucosamine-6-phosphate to glucosamine-1-phosphate. This is Phosphoglucosamine mutase from Thermosipho africanus (strain TCF52B).